The sequence spans 168 residues: Heat shock protein beta-9 (168 aa).

The span at 1-12 (MQRVGSSFSTGQ) shows a compositional bias: polar residues. Disordered regions lie at residues 1 to 25 (MQRV…SRCP), 83 to 104 (TGQR…EQSV), and 129 to 168 (LWLR…VKNP). A sHSP domain is found at 38-151 (LPVRLLRDEV…EAQTGQSQKP (114 aa)). Basic and acidic residues predominate over residues 86–104 (RQHESNDPSRGRYRMEQSV). The span at 158-168 (SSLQNESVKNP) shows a compositional bias: polar residues.

The protein belongs to the small heat shock protein (HSP20) family. As to expression, testis specific.

The protein localises to the cytoplasm. It localises to the nucleus. In Mus musculus (Mouse), this protein is Heat shock protein beta-9 (Hspb9).